Consider the following 585-residue polypeptide: Lipoprotein LpqB (585 aa).

An N-terminal signal peptide occupies residues 1-18 (MKRLLTVLVVGLVALVSG). The N-palmitoyl cysteine moiety is linked to residue cysteine 19. A lipid anchor (S-diacylglycerol cysteine) is attached at cysteine 19. The interval 24 to 46 (SSSSPQAIGTVERPAPPSLPKPT) is disordered. Pro residues predominate over residues 37–46 (PAPPSLPKPT).

Belongs to the LpqB lipoprotein family. In terms of assembly, interacts with MtrB, probably extracytoplasmically via its sensor domain.

It localises to the cell membrane. The protein localises to the secreted. Its subcellular location is the cell wall. Functionally, may modulate activity of the MtrAB system in controlling homeostasis of the cell wall and cell division. The sequence is that of Lipoprotein LpqB from Mycolicibacterium smegmatis (strain ATCC 700084 / mc(2)155) (Mycobacterium smegmatis).